A 59-amino-acid chain; its full sequence is Phycobilisome degradation protein NblA (59 aa).

This sequence to chloroplast ycf18.

Functionally, involved in phycobilisome (PBS) degradation during nutrient deprivation. May mark the PBS for degradation by covalent association with PBS components or may disrupt the PBS via ionic interactions. The chain is Phycobilisome degradation protein NblA from Synechococcus elongatus (strain ATCC 33912 / PCC 7942 / FACHB-805) (Anacystis nidulans R2).